The sequence spans 343 residues: Dual-specificity RNA methyltransferase RlmN (343 aa).

The Proton acceptor role is filled by E92. The region spanning 98-325 (DEDRTTLCIS…VITRSSRGSD (228 aa)) is the Radical SAM core domain. C105 and C330 are joined by a disulfide. Residues C112, C116, and C119 each coordinate [4Fe-4S] cluster. S-adenosyl-L-methionine is bound by residues 157 to 158 (GE), S189, 211 to 213 (SLN), and N287. Residue C330 is the S-methylcysteine intermediate of the active site.

This sequence belongs to the radical SAM superfamily. RlmN family. Requires [4Fe-4S] cluster as cofactor.

It is found in the cytoplasm. It carries out the reaction adenosine(2503) in 23S rRNA + 2 reduced [2Fe-2S]-[ferredoxin] + 2 S-adenosyl-L-methionine = 2-methyladenosine(2503) in 23S rRNA + 5'-deoxyadenosine + L-methionine + 2 oxidized [2Fe-2S]-[ferredoxin] + S-adenosyl-L-homocysteine. The enzyme catalyses adenosine(37) in tRNA + 2 reduced [2Fe-2S]-[ferredoxin] + 2 S-adenosyl-L-methionine = 2-methyladenosine(37) in tRNA + 5'-deoxyadenosine + L-methionine + 2 oxidized [2Fe-2S]-[ferredoxin] + S-adenosyl-L-homocysteine. Its function is as follows. Specifically methylates position 2 of adenine 2503 in 23S rRNA and position 2 of adenine 37 in tRNAs. m2A2503 modification seems to play a crucial role in the proofreading step occurring at the peptidyl transferase center and thus would serve to optimize ribosomal fidelity. This chain is Dual-specificity RNA methyltransferase RlmN, found in Geotalea uraniireducens (strain Rf4) (Geobacter uraniireducens).